The primary structure comprises 305 residues: Methionyl-tRNA formyltransferase (305 aa).

111 to 114 (SLLP) lines the (6S)-5,6,7,8-tetrahydrofolate pocket.

This sequence belongs to the Fmt family.

It catalyses the reaction L-methionyl-tRNA(fMet) + (6R)-10-formyltetrahydrofolate = N-formyl-L-methionyl-tRNA(fMet) + (6S)-5,6,7,8-tetrahydrofolate + H(+). Attaches a formyl group to the free amino group of methionyl-tRNA(fMet). The formyl group appears to play a dual role in the initiator identity of N-formylmethionyl-tRNA by promoting its recognition by IF2 and preventing the misappropriation of this tRNA by the elongation apparatus. This is Methionyl-tRNA formyltransferase from Campylobacter jejuni subsp. doylei (strain ATCC BAA-1458 / RM4099 / 269.97).